Here is a 249-residue protein sequence, read N- to C-terminus: MKKIELGHHSEAAKPDCIKALIVEFITTFLFVFAGVGSAMATDSLVGNTLVGLFAVAVAHAFVVAVMISAGHISGGHLNPAVTLGLLLGGHISVFRAFLYWIDQLLASSAACFLLSYLTGGMGTPVHTLASGVSYTQGIIWEIILTFSLLFTVYATIVDPKKGSLDGFGPLLTGFVVGANILAGGAFSGASMNPARSFGPALVSGNWTDHWVYWVGPLIGGGLAGFIYENVLIDRPHVPVADDEQPLLN.

The residue at position 1 (M1) is an N-acetylmethionine. The Cytoplasmic portion of the chain corresponds to 1–20 (MKKIELGHHSEAAKPDCIKA). K3 bears the N6,N6-dimethyllysine mark. Residues 21-41 (LIVEFITTFLFVFAGVGSAMA) form a helical membrane-spanning segment. Topologically, residues 42-49 (TDSLVGNT) are vacuolar. A helical transmembrane segment spans residues 50 to 70 (LVGLFAVAVAHAFVVAVMISA). Residues 71–105 (GHISGGHLNPAVTLGLLLGGHISVFRAFLYWIDQL) are Cytoplasmic-facing. The NPA 1 motif lies at 79-81 (NPA). The chain crosses the membrane as a helical span at residues 106–126 (LASSAACFLLSYLTGGMGTPV). Topologically, residues 127 to 137 (HTLASGVSYTQ) are vacuolar. A helical membrane pass occupies residues 138 to 158 (GIIWEIILTFSLLFTVYATIV). The Cytoplasmic portion of the chain corresponds to 159–166 (DPKKGSLD). The helical transmembrane segment at 167-187 (GFGPLLTGFVVGANILAGGAF) threads the bilayer. The Vacuolar portion of the chain corresponds to 188-212 (SGASMNPARSFGPALVSGNWTDHWV). An NPA 2 motif is present at residues 193–195 (NPA). Residues 213–233 (YWVGPLIGGGLAGFIYENVLI) form a helical membrane-spanning segment. Residues 234 to 249 (DRPHVPVADDEQPLLN) are Cytoplasmic-facing.

Belongs to the MIP/aquaporin (TC 1.A.8) family. TIP (TC 1.A.8.10) subfamily. In terms of tissue distribution, expressed in roots.

Its subcellular location is the vacuole membrane. In terms of biological role, aquaporins facilitate the transport of water and small neutral solutes across cell membranes. Transports urea in yeast cells in a pH-independent manner. This Arabidopsis thaliana (Mouse-ear cress) protein is Aquaporin TIP4-1 (TIP4-1).